Reading from the N-terminus, the 690-residue chain is Protein-glucosylgalactosylhydroxylysine glucosidase (690 aa).

Trp-299–Asp-300 serves as a coordination point for substrate. Glu-429 functions as the Proton donor in the catalytic mechanism. Residue Lys-497–Gln-498 coordinates substrate.

Belongs to the glycosyl hydrolase 65 family.

The catalysed reaction is (5R)-5-O-[alpha-D-glucosyl-(1-&gt;2)-beta-D-galactosyl]-5-hydroxy-L-lysyl-[collagen] + H2O = (5R)-5-O-(beta-D-galactosyl)-5-hydroxy-L-lysyl-[collagen] + D-glucose. In terms of biological role, catalyzes the hydrolysis of glucose from the disaccharide unit linked to hydroxylysine residues of collagen and collagen-like proteins. This chain is Protein-glucosylgalactosylhydroxylysine glucosidase, found in Mus musculus (Mouse).